The primary structure comprises 141 residues: Hydroperoxide reductase (141 aa).

The protein belongs to the OsmC/Ohr family. In terms of assembly, homodimer.

It localises to the cytoplasm. Reduces organic and inorganic peroxide substrates. Protects the cell against oxidative stress. This Mycoplasma genitalium (strain ATCC 33530 / DSM 19775 / NCTC 10195 / G37) (Mycoplasmoides genitalium) protein is Hydroperoxide reductase.